The primary structure comprises 396 residues: Argininosuccinate synthase (396 aa).

ATP is bound by residues 10–18 (AYSGGLDTS) and alanine 37. L-citrulline contacts are provided by tyrosine 88 and serine 93. ATP is bound at residue glycine 118. The L-aspartate site is built by threonine 120, asparagine 124, and aspartate 125. Asparagine 124 is an L-citrulline binding site. L-citrulline contacts are provided by arginine 128, serine 176, serine 185, glutamate 261, and tyrosine 273.

This sequence belongs to the argininosuccinate synthase family. Type 1 subfamily. In terms of assembly, homotetramer.

The protein localises to the cytoplasm. The catalysed reaction is L-citrulline + L-aspartate + ATP = 2-(N(omega)-L-arginino)succinate + AMP + diphosphate + H(+). It functions in the pathway amino-acid biosynthesis; L-arginine biosynthesis; L-arginine from L-ornithine and carbamoyl phosphate: step 2/3. This Nitratidesulfovibrio vulgaris (strain DP4) (Desulfovibrio vulgaris) protein is Argininosuccinate synthase.